Reading from the N-terminus, the 656-residue chain is MWKGLLQSTRAAWRGPCVRAPRLPFFRRYSLCVDPEIAALSGPELEARIAAIPIERYRNFSIVAHVDHGKSTLSDRLLELTGVIAAGGQKQFLDKLDVERERGITVKAQTCTMLYKHKGEDYLLHLVDTPGHVDFRAEVSRSYASCGGALLLVDASQGVQAQTVANFFLAFSLNLTLLPVINKIDLEVADIPRSMDQIESTFELPTDNVLQVSAKTGLNVDQILPNVIENIPGPDGKLEDPLRALIVDSWYDNYLGVVLLTYVRDGVVSRGTKVISHHTGRKYDVKEVGIMYPGSVKTKELKAGQVGYMALGMKSSSEAHTGDTLIKVNSNAEPLPGFAETKPMVFVGVFPGEGMDFADLEESLQHLTLNDRSVTMTKATSQALGQGWRMGFLGTLHASVFEDRLLQEHGAHVIITAPSVPYRVVYHPRGKETEPTIVEIDNPANFPDLQLEKARIQSLEEPMVACTMTLPQEYIGSVMSLCEANRGEQVDMNYLNQTQVLLKYRIPLNQLVEDFFGKLKAASQGFASLDYEEDGYMASKLVRLDMCVNGEVVDALSQVMHVSQAETRARDWVEKFKTFLRWHQFDVIIQAKIGNKILARETIKARKKDVLAKLHAADLSRKAKLLKNQKAGKNRLQTAGRVNIPKEAFSGFLSKT.

The transit peptide at 1–28 (MWKGLLQSTRAAWRGPCVRAPRLPFFRR) directs the protein to the mitochondrion. Positions 55–235 (ERYRNFSIVA…NVIENIPGPD (181 aa)) constitute a tr-type G domain. GTP contacts are provided by residues 64–71 (AHVDHGKS), 128–132 (DTPGH), and 182–185 (NKID).

Belongs to the TRAFAC class translation factor GTPase superfamily. Classic translation factor GTPase family. LepA subfamily.

The protein resides in the mitochondrion inner membrane. It carries out the reaction GTP + H2O = GDP + phosphate + H(+). In terms of biological role, promotes mitochondrial protein synthesis. May act as a fidelity factor of the translation reaction, by catalyzing a one-codon backward translocation of tRNAs on improperly translocated ribosomes. Binds to mitochondrial ribosomes in a GTP-dependent manner. The polypeptide is Translation factor GUF1, mitochondrial (Yarrowia lipolytica (strain CLIB 122 / E 150) (Yeast)).